The chain runs to 141 residues: Small ribosomal subunit protein bS16 (141 aa).

Composition is skewed to polar residues over residues 89–101 (NVSV…TEAI) and 109–129 (ATAN…TATI). The segment at 89–141 (NVSVSHAESTEAITNAEPIQATANTESNEVSDSESTATATIRESEEQPPISES) is disordered.

The protein belongs to the bacterial ribosomal protein bS16 family.

The sequence is that of Small ribosomal subunit protein bS16 from Trichodesmium erythraeum (strain IMS101).